The chain runs to 553 residues: Glycerol kinase 2 (553 aa).

T20 is a binding site for substrate. R24 contributes to the ATP binding site. 3 residues coordinate substrate: R94, Y148, and D259. ATP-binding positions include T281, G326, and 427 to 431 (GMTNN). Residues 526–546 (IFSSMPLGFFIVSSMVMLIGA) form a helical membrane-spanning segment.

It belongs to the FGGY kinase family. Interacts with ARMC12 and PLD6.

It localises to the mitochondrion outer membrane. The protein resides in the cytoplasm. It catalyses the reaction glycerol + ATP = sn-glycerol 3-phosphate + ADP + H(+). It participates in polyol metabolism; glycerol degradation via glycerol kinase pathway; sn-glycerol 3-phosphate from glycerol: step 1/1. Key enzyme in the regulation of glycerol uptake and metabolism. Essential for male fertility and sperm mitochondrial sheath formation. Required for proper arrangement of crescent-like mitochondria to form the mitochondrial sheath during spermatogenesis. Can induce mitochondrial clustering through interactions with PLD6 and up-regulation of phosphatidic acid synthesis in the mitochondria. This Macaca fascicularis (Crab-eating macaque) protein is Glycerol kinase 2 (GK2).